The primary structure comprises 415 residues: Succinate--CoA ligase [GDP-forming] subunit beta, mitochondrial (415 aa).

Residues methionine 1–phenylalanine 19 constitute a mitochondrion transit peptide. The ATP-grasp domain occupies lysine 28–phenylalanine 258. GTP is bound by residues glutamine 39, glycine 72–glycine 74, and valine 130. Residues asparagine 227 and aspartate 241 each contribute to the Mg(2+) site. Residues asparagine 292 and glycine 349–valine 351 contribute to the substrate site.

Belongs to the succinate/malate CoA ligase beta subunit family. GTP-specific subunit beta subfamily. As to quaternary structure, heterodimer of an alpha and a beta subunit. The beta subunit determines specificity for GTP. Requires Mg(2+) as cofactor.

The protein resides in the mitochondrion. It catalyses the reaction GTP + succinate + CoA = succinyl-CoA + GDP + phosphate. The protein operates within carbohydrate metabolism; tricarboxylic acid cycle; succinate from succinyl-CoA (ligase route): step 1/1. Its function is as follows. GTP-specific succinyl-CoA synthetase functions in the citric acid cycle (TCA), coupling the hydrolysis of succinyl-CoA to the synthesis of GTP and thus represents the only step of substrate-level phosphorylation in the TCA. The beta subunit provides nucleotide specificity of the enzyme and binds the substrate succinate, while the binding sites for coenzyme A and phosphate are found in the alpha subunit. In Caenorhabditis elegans, this protein is Succinate--CoA ligase [GDP-forming] subunit beta, mitochondrial.